Reading from the N-terminus, the 251-residue chain is Alanyl-tRNA editing protein AlaX-M (251 aa).

Zn(2+) contacts are provided by His-107, His-111, Cys-210, and His-214.

This sequence belongs to the class-II aminoacyl-tRNA synthetase family. Editing domain AlaX-M subfamily. The cofactor is Zn(2+).

The protein localises to the cytoplasm. Functionally, functions in trans to edit the amino acid moiety from mischarged Ser-tRNA(Ala). Recognition depends, at least in part, on the acceptor stem of tRNA(Ala). This Methanosarcina mazei (strain ATCC BAA-159 / DSM 3647 / Goe1 / Go1 / JCM 11833 / OCM 88) (Methanosarcina frisia) protein is Alanyl-tRNA editing protein AlaX-M (alaXM).